A 432-amino-acid polypeptide reads, in one-letter code: Adenylosuccinate synthetase (432 aa).

Residues 13 to 19 (GDEGKGK) and 41 to 43 (GHT) each bind GTP. Asp-14 (proton acceptor) is an active-site residue. Mg(2+) contacts are provided by Asp-14 and Gly-41. Residues 14–17 (DEGK), 39–42 (NAGH), Thr-130, Arg-144, Gln-225, Thr-240, and Arg-304 each bind IMP. His-42 functions as the Proton donor in the catalytic mechanism. 300–306 (AVTGRPR) is a substrate binding site. Residues Arg-306, 332-334 (KLD), and 415-417 (STG) each bind GTP.

Belongs to the adenylosuccinate synthetase family. In terms of assembly, homodimer. Requires Mg(2+) as cofactor.

Its subcellular location is the cytoplasm. The catalysed reaction is IMP + L-aspartate + GTP = N(6)-(1,2-dicarboxyethyl)-AMP + GDP + phosphate + 2 H(+). It functions in the pathway purine metabolism; AMP biosynthesis via de novo pathway; AMP from IMP: step 1/2. Its function is as follows. Plays an important role in the de novo pathway of purine nucleotide biosynthesis. Catalyzes the first committed step in the biosynthesis of AMP from IMP. The sequence is that of Adenylosuccinate synthetase from Glaesserella parasuis serovar 5 (strain SH0165) (Haemophilus parasuis).